The primary structure comprises 448 residues: MGLKLWVKQRRSLPFIIGTIAIALFTDLFLYGIITPILPFSLVDRVGISPDRVQSVISTLLAVYAVANIAASSPIGFLADKFLTRKVPMLIGLIFLTSATALLTFGNSVPMLIVARVLQGLSAAVVWTVGLALLVDVVGADNVGSTMGGIFGFISLGEIIAPVFGGIVYESLGYYASFGVCFIILLLDIALRFLMIEPREMKNDSTLQDVERTSILQRQDTQDHELKPKRSGLFSSLCLPIYSLLHHKQIFGPFWTSFVNSCLFSAFDATIPLELKTLFDFNSLQCGLMFGVLSTPYFFCGAWAGAMVDRRGSRTIGKRAYAILGCTLFLLCIPRTNTSLNIYLFSAFLAINGVVLAFTSSPGFVQSSHYVAEYELEHPTFFGHNGPYTQLFSAYNIVYSLGMIIGPLVAGFLRDQFNFITSIACLSLLCFSASLMANSCFTDRLDSE.

12 helical membrane passes run 14-34, 59-79, 87-107, 120-140, 148-168, 171-191, 250-270, 288-308, 316-333, 338-358, 392-412, and 417-437; these read PFII…YGII, TLLA…GFLA, VPML…TFGN, GLSA…VVGA, GGIF…GGIV, SLGY…DIAL, IFGP…FDAT, LMFG…GAMV, IGKR…LLCI, TSLN…VLAF, FSAY…VAGF, and FNFI…SLMA.

This sequence belongs to the major facilitator superfamily. TCR/Tet family.

It is found in the endoplasmic reticulum. The protein resides in the membrane. This is an uncharacterized protein from Schizosaccharomyces pombe (strain 972 / ATCC 24843) (Fission yeast).